Reading from the N-terminus, the 105-residue chain is CRISPR-associated endoribonuclease Cas2 1 (105 aa).

D20 provides a ligand contact to Mg(2+).

Belongs to the CRISPR-associated endoribonuclease Cas2 protein family. In terms of assembly, homodimer, forms a heterotetramer with a Cas1 homodimer. Mg(2+) serves as cofactor.

Its function is as follows. CRISPR (clustered regularly interspaced short palindromic repeat), is an adaptive immune system that provides protection against mobile genetic elements (viruses, transposable elements and conjugative plasmids). CRISPR clusters contain sequences complementary to antecedent mobile elements and target invading nucleic acids. CRISPR clusters are transcribed and processed into CRISPR RNA (crRNA). Functions as a ssRNA-specific endoribonuclease. Involved in the integration of spacer DNA into the CRISPR cassette. The sequence is that of CRISPR-associated endoribonuclease Cas2 1 (cas21) from Nitrosomonas europaea (strain ATCC 19718 / CIP 103999 / KCTC 2705 / NBRC 14298).